We begin with the raw amino-acid sequence, 351 residues long: DNA polymerase IV (351 aa).

One can recognise a UmuC domain in the interval 3 to 187; the sequence is ILFVDFDYFF…IDIDEVPGVG (185 aa). Residues Asp7 and Asp105 each contribute to the Mg(2+) site. Glu106 is an active-site residue.

The protein belongs to the DNA polymerase type-Y family. It depends on Mg(2+) as a cofactor.

The enzyme catalyses DNA(n) + a 2'-deoxyribonucleoside 5'-triphosphate = DNA(n+1) + diphosphate. Its function is as follows. Poorly processive, error-prone DNA polymerase involved in untargeted mutagenesis. Copies undamaged DNA at stalled replication forks, which arise in vivo from mismatched or misaligned primer ends. These misaligned primers can be extended by PolIV. Exhibits no 3'-5' exonuclease (proofreading) activity. May be involved in translesional synthesis. The chain is DNA polymerase IV from Sulfurisphaera tokodaii (strain DSM 16993 / JCM 10545 / NBRC 100140 / 7) (Sulfolobus tokodaii).